Reading from the N-terminus, the 433-residue chain is C2H2 type master regulator of conidiophore development brlA (433 aa).

Disordered stretches follow at residues 23-64 (PSEC…SHYH) and 240-265 (KTHT…PVSR). Over residues 30–48 (TSSFSPLDSPTPTPTSLYS) the composition is skewed to low complexity. Residues 240–264 (KTHTPSTPHRSVSMGTPSGSDTPVS) are compositionally biased toward polar residues. 2 C2H2-type zinc fingers span residues 321–345 (FKCK…MKSH) and 351–376 (HVCW…TKTH). Positions 391–416 (ETSQDFDPDFRGQLTPDGRPIYGSKL) are disordered.

It is found in the nucleus. In terms of biological role, brlA, abaA and wetA are pivotal regulators of conidiophore development and conidium maturation. They act individually and together to regulate their own expression and that of numerous other sporulation-specific genes. Binds promoters of target genes at brlA response elements (BREs) containing the conserved sequence 5'-(C/A)(A/G)AGGG(G/A)-3'. Is not required for penicillin V production. The sequence is that of C2H2 type master regulator of conidiophore development brlA from Penicillium rubens (strain ATCC 28089 / DSM 1075 / NRRL 1951 / Wisconsin 54-1255) (Penicillium chrysogenum).